The chain runs to 128 residues: Transcription antitermination protein NusB (128 aa).

The protein belongs to the NusB family.

In terms of biological role, involved in transcription antitermination. Required for transcription of ribosomal RNA (rRNA) genes. Binds specifically to the boxA antiterminator sequence of the ribosomal RNA (rrn) operons. This Staphylococcus haemolyticus (strain JCSC1435) protein is Transcription antitermination protein NusB.